Consider the following 375-residue polypeptide: Succinyl-diaminopimelate desuccinylase (375 aa).

His66 lines the Zn(2+) pocket. Residue Asp68 is part of the active site. Asp99 contacts Zn(2+). Glu133 (proton acceptor) is an active-site residue. The Zn(2+) site is built by Glu134, Glu162, and His348.

This sequence belongs to the peptidase M20A family. DapE subfamily. Homodimer. The cofactor is Zn(2+). Co(2+) is required as a cofactor.

It carries out the reaction N-succinyl-(2S,6S)-2,6-diaminopimelate + H2O = (2S,6S)-2,6-diaminopimelate + succinate. It participates in amino-acid biosynthesis; L-lysine biosynthesis via DAP pathway; LL-2,6-diaminopimelate from (S)-tetrahydrodipicolinate (succinylase route): step 3/3. Its function is as follows. Catalyzes the hydrolysis of N-succinyl-L,L-diaminopimelic acid (SDAP), forming succinate and LL-2,6-diaminopimelate (DAP), an intermediate involved in the bacterial biosynthesis of lysine and meso-diaminopimelic acid, an essential component of bacterial cell walls. The polypeptide is Succinyl-diaminopimelate desuccinylase (Escherichia coli O157:H7).